The chain runs to 584 residues: 2-isopropylmalate synthase (584 aa).

The region spanning 45–323 (PRWLSTDLRD…SPNLDFSKLD (279 aa)) is the Pyruvate carboxyltransferase domain. Residues Asp54, His262, His264, and Asn298 each coordinate a divalent metal cation.

Belongs to the alpha-IPM synthase/homocitrate synthase family. LeuA type 2 subfamily. As to quaternary structure, homodimer. The cofactor is a divalent metal cation.

The enzyme catalyses 3-methyl-2-oxobutanoate + acetyl-CoA + H2O = (2S)-2-isopropylmalate + CoA + H(+). Its pathway is amino-acid biosynthesis; L-leucine biosynthesis; L-leucine from 3-methyl-2-oxobutanoate: step 1/4. Functionally, catalyzes the condensation of the acetyl group of acetyl-CoA with 3-methyl-2-oxobutanoate (2-oxoisovalerate) to form 3-carboxy-3-hydroxy-4-methylpentanoate (2-isopropylmalate). In Schizosaccharomyces pombe (strain 972 / ATCC 24843) (Fission yeast), this protein is 2-isopropylmalate synthase (leu3).